Reading from the N-terminus, the 155-residue chain is Peptide methionine sulfoxide reductase MsrB (155 aa).

The MsrB domain occupies 15–137 (REALIATLNA…NSVSLTFIPT (123 aa)). The Zn(2+) site is built by cysteine 54, cysteine 57, cysteine 103, and cysteine 106. The Nucleophile role is filled by cysteine 126.

This sequence belongs to the MsrB Met sulfoxide reductase family. Zn(2+) serves as cofactor.

It carries out the reaction L-methionyl-[protein] + [thioredoxin]-disulfide + H2O = L-methionyl-(R)-S-oxide-[protein] + [thioredoxin]-dithiol. The protein is Peptide methionine sulfoxide reductase MsrB of Xylella fastidiosa (strain M23).